Consider the following 156-residue polypeptide: Methylated-DNA--protein-cysteine methyltransferase (156 aa).

Residue C120 is the Nucleophile; methyl group acceptor of the active site.

It belongs to the MGMT family.

Its subcellular location is the cytoplasm. It catalyses the reaction a 6-O-methyl-2'-deoxyguanosine in DNA + L-cysteinyl-[protein] = S-methyl-L-cysteinyl-[protein] + a 2'-deoxyguanosine in DNA. It carries out the reaction a 4-O-methyl-thymidine in DNA + L-cysteinyl-[protein] = a thymidine in DNA + S-methyl-L-cysteinyl-[protein]. Its function is as follows. Involved in the cellular defense against the biological effects of O6-methylguanine (O6-MeG) and O4-methylthymine (O4-MeT) in DNA. Repairs the methylated nucleobase in DNA by stoichiometrically transferring the methyl group to a cysteine residue in the enzyme. This is a suicide reaction: the enzyme is irreversibly inactivated. The protein is Methylated-DNA--protein-cysteine methyltransferase of Sulfurisphaera tokodaii (strain DSM 16993 / JCM 10545 / NBRC 100140 / 7) (Sulfolobus tokodaii).